We begin with the raw amino-acid sequence, 108 residues long: UPF0060 membrane protein Mflv_3127 (108 aa).

The next 4 helical transmembrane spans lie at 7-27 (LLFVLAAVLEIGGAWLVWQGF), 32-52 (GWLWVGAGVLALGAYGFVAAF), 61-81 (VLAAYGGVFVAGSLIWGMVAD), and 87-107 (RWDITGAAVCLLGVVLIMYAP).

This sequence belongs to the UPF0060 family.

It is found in the cell membrane. In Mycolicibacterium gilvum (strain PYR-GCK) (Mycobacterium gilvum (strain PYR-GCK)), this protein is UPF0060 membrane protein Mflv_3127.